Reading from the N-terminus, the 162-residue chain is MVEQKDKYRPCVGIMLFNRQGHAFIGKRFESDSYWQMPQGGVDDGEELEQAALRELLEEVGTNKVKVITKSKDWIYYNLPEEVIPICWNGKYSGQKQRWFLMKFCGEDEDIDINYTGHPEFKEWRWQGIDSLVASAISFKKEVYKTVIEEFSSIIKASTISS.

A Nudix hydrolase domain is found at 7 to 149 (KYRPCVGIML…KKEVYKTVIE (143 aa)). The Nudix box signature appears at 40 to 61 (GGVDDGEELEQAALRELLEEVG).

This sequence belongs to the Nudix hydrolase family. RppH subfamily. A divalent metal cation serves as cofactor.

Functionally, accelerates the degradation of transcripts by removing pyrophosphate from the 5'-end of triphosphorylated RNA, leading to a more labile monophosphorylated state that can stimulate subsequent ribonuclease cleavage. The sequence is that of RNA pyrophosphohydrolase from Wolbachia pipientis wMel.